The primary structure comprises 625 residues: Chromatin structure-remodeling complex subunit RSC4 (625 aa).

Positions 1-35 are disordered; that stretch reads MVVKKRKLATEAGGSDERPKYLPGKHPKNQEKTPH. Bromo domains are found at residues 53–158 and 181–292; these read WHIP…VLKA and KLVD…IQKE. A phosphoserine mark is found at Ser199 and Ser545. The span at 536–552 shows a compositional bias: polar residues; it reads RTSNVNSNLSQPQQQEN. A disordered region spans residues 536–555; the sequence is RTSNVNSNLSQPQQQENDVI.

In terms of assembly, component of the two forms of the RSC complex composed of at least either RSC1 or RSC2, and ARP7, ARP9, LDB7, NPL6, RSC3, RSC30, RSC4, RSC58, RSC6, RSC8, RSC9, SFH1, STH1, HTL1 and probably RTT102. The complexes interact with histone and histone variant components of centromeric chromatin.

The protein localises to the nucleus. Component of the chromatin structure remodeling complex (RSC), which is involved in transcription regulation and nucleosome positioning. RSC is responsible for the transfer of a histone octamer from a nucleosome core particle to naked DNA. The reaction requires ATP and involves an activated RSC-nucleosome intermediate. Remodeling reaction also involves DNA translocation, DNA twist and conformational change. As a reconfigurer of centromeric and flanking nucleosomes, RSC complex is required both for proper kinetochore function in chromosome segregation and, via a PKC1-dependent signaling pathway, for organization of the cellular cytoskeleton. The polypeptide is Chromatin structure-remodeling complex subunit RSC4 (RSC4) (Saccharomyces cerevisiae (strain ATCC 204508 / S288c) (Baker's yeast)).